The following is a 157-amino-acid chain: AP-1 complex subunit sigma-2 (157 aa).

The protein belongs to the adaptor complexes small subunit family. As to quaternary structure, adaptor protein complex 1 (AP-1) is a heterotetramer composed of two large adaptins (gamma-type subunit AP1G1 and beta-type subunit AP1B1), a medium adaptin (mu-type subunit AP1M1 or AP1M2) and a small adaptin (sigma-type subunit AP1S1 or AP1S2 or AP1S3). Binds to MUC1. As to expression, widely expressed.

The protein localises to the golgi apparatus. Its subcellular location is the cytoplasmic vesicle membrane. The protein resides in the membrane. It is found in the clathrin-coated pit. Its function is as follows. Subunit of clathrin-associated adaptor protein complex 1 that plays a role in protein sorting in the late-Golgi/trans-Golgi network (TGN) and/or endosomes. The AP complexes mediate both the recruitment of clathrin to membranes and the recognition of sorting signals within the cytosolic tails of transmembrane cargo molecules. The protein is AP-1 complex subunit sigma-2 (AP1S2) of Homo sapiens (Human).